Reading from the N-terminus, the 324-residue chain is Membrane protein UL8 (324 aa).

Positions Ile36–Lys138 are immunoglobulin V-like domain. The chain crosses the membrane as a helical span at residues Thr278–Leu298.

The protein belongs to the RL11 family. In terms of processing, highly glycosylated.

The protein resides in the host cell membrane. Plays a role in the inhibition of pro-inflammatory cytokine production. This effect is mediated by the conserved Ig-like domain. This chain is Membrane protein UL8 (UL8), found in Homo sapiens (Human).